The chain runs to 168 residues: Peroxynitrite isomerase (168 aa).

The GXWXGXG signature appears at 25–31 (GTWRGAG). H160 serves as a coordination point for heme b.

The protein belongs to the nitrobindin family. As to quaternary structure, homodimer. Requires heme b as cofactor.

It catalyses the reaction peroxynitrite = nitrate. Its pathway is nitrogen metabolism. Heme-binding protein able to scavenge peroxynitrite and to protect free L-tyrosine against peroxynitrite-mediated nitration, by acting as a peroxynitrite isomerase that converts peroxynitrite to nitrate. Therefore, this protein likely plays a role in peroxynitrite sensing and in the detoxification of reactive nitrogen and oxygen species (RNS and ROS, respectively). Is able to bind nitric oxide (NO) in vitro, but may act as a sensor of peroxynitrite levels in vivo. The polypeptide is Peroxynitrite isomerase (Nocardia farcinica (strain IFM 10152)).